The primary structure comprises 234 residues: Proteasome subunit alpha (234 aa).

This sequence belongs to the peptidase T1A family. In terms of assembly, the 20S proteasome core is composed of 14 alpha and 14 beta subunits that assemble into four stacked heptameric rings, resulting in a barrel-shaped structure. The two inner rings, each composed of seven catalytic beta subunits, are sandwiched by two outer rings, each composed of seven alpha subunits. The catalytic chamber with the active sites is on the inside of the barrel. Has a gated structure, the ends of the cylinder being occluded by the N-termini of the alpha-subunits. Is capped at one or both ends by the proteasome regulatory ATPase, PAN.

It is found in the cytoplasm. Its activity is regulated as follows. The formation of the proteasomal ATPase PAN-20S proteasome complex, via the docking of the C-termini of PAN into the intersubunit pockets in the alpha-rings, triggers opening of the gate for substrate entry. Interconversion between the open-gate and close-gate conformations leads to a dynamic regulation of the 20S proteasome proteolysis activity. Its function is as follows. Component of the proteasome core, a large protease complex with broad specificity involved in protein degradation. The chain is Proteasome subunit alpha from Picrophilus torridus (strain ATCC 700027 / DSM 9790 / JCM 10055 / NBRC 100828 / KAW 2/3).